A 205-amino-acid polypeptide reads, in one-letter code: dITP/XTP pyrophosphatase (205 aa).

8-13 (SGNKGK) is a substrate binding site. The Proton acceptor role is filled by aspartate 69. Aspartate 69 contacts Mg(2+). Substrate-binding positions include serine 70, 153 to 156 (HGYD), lysine 176, and 181 to 182 (HR).

The protein belongs to the HAM1 NTPase family. In terms of assembly, homodimer. Mg(2+) is required as a cofactor.

The catalysed reaction is XTP + H2O = XMP + diphosphate + H(+). The enzyme catalyses dITP + H2O = dIMP + diphosphate + H(+). It catalyses the reaction ITP + H2O = IMP + diphosphate + H(+). Functionally, pyrophosphatase that catalyzes the hydrolysis of nucleoside triphosphates to their monophosphate derivatives, with a high preference for the non-canonical purine nucleotides XTP (xanthosine triphosphate), dITP (deoxyinosine triphosphate) and ITP. Seems to function as a house-cleaning enzyme that removes non-canonical purine nucleotides from the nucleotide pool, thus preventing their incorporation into DNA/RNA and avoiding chromosomal lesions. The protein is dITP/XTP pyrophosphatase of Shewanella oneidensis (strain ATCC 700550 / JCM 31522 / CIP 106686 / LMG 19005 / NCIMB 14063 / MR-1).